Reading from the N-terminus, the 236-residue chain is Probable ascorbate-specific transmembrane electron transporter 2 (236 aa).

Topologically, residues 1-11 are cytoplasmic; it reads MAAGLGVKAAP. A helical transmembrane segment spans residues 12–32; sequence FTYVAHALAVAAAVMVLVWCI. The Cytochrome b561 domain maps to 15–219; sequence VAHALAVAAA…FGAAVVVAAV (205 aa). The Extracellular segment spans residues 33 to 53; sequence SFRGGLAFEADNKNLIFNVHP. Residue His-52 participates in heme b binding. The chain crosses the membrane as a helical span at residues 54–74; it reads VLMLIGYIILGSEAIMIYKIF. 67–75 lines the L-ascorbate pocket; sequence AIMIYKIFP. The Cytoplasmic portion of the chain corresponds to 75 to 84; sequence PKLNHDTTKL. A helical membrane pass occupies residues 85–105; that stretch reads IHLILHAIAIVLGAVGIYCAF. Heme b is bound by residues His-86 and His-120. Residues 106–122 are Extracellular-facing; it reads KFHNESGIANLYSLHSW. A monodehydro-L-ascorbate radical-binding site is contributed by 116 to 125; sequence LYSLHSWLGI. A helical membrane pass occupies residues 123 to 143; that stretch reads LGIGTISLYGIQWIFGFVAFF. The Cytoplasmic segment spans residues 144 to 153; that stretch reads YPGAAPHVRR. Residues 154–174 form a helical membrane-spanning segment; that stretch reads GALPWHVLFGLFVYVLTLATA. His-159 lines the heme b pocket. Topologically, residues 175–196 are extracellular; that stretch reads ELGLLEKLTFLQSSGLDKYGAE. Residues 197 to 217 traverse the membrane as a helical segment; sequence AFLVNFTGLVVALFGAAVVVA. Topologically, residues 218-236 are cytoplasmic; the sequence is AVAPAHVEEPEGYAPIPVN.

It depends on heme b as a cofactor.

Its subcellular location is the membrane. Two-heme-containing cytochrome. Catalyzes ascorbate-dependent trans-membrane electron transfer by utilizing a concerted H(+)/e(-) transfer mechanism. In Oryza sativa subsp. japonica (Rice), this protein is Probable ascorbate-specific transmembrane electron transporter 2.